The following is a 268-amino-acid chain: Aliphatic sulfonates import ATP-binding protein SsuB (268 aa).

Residues 15–236 (LAVRNLQKTF…VRGSHRLAAL (222 aa)) enclose the ABC transporter domain. Residue 47–54 (GRSGCGKS) coordinates ATP.

Belongs to the ABC transporter superfamily. Aliphatic sulfonates importer (TC 3.A.1.17.2) family. The complex is composed of two ATP-binding proteins (SsuB), two transmembrane proteins (SsuC) and a solute-binding protein (SsuA).

The protein resides in the cell inner membrane. The enzyme catalyses ATP + H2O + aliphatic sulfonate-[sulfonate-binding protein]Side 1 = ADP + phosphate + aliphatic sulfonateSide 2 + [sulfonate-binding protein]Side 1.. Its function is as follows. Part of the ABC transporter complex SsuABC involved in aliphatic sulfonates import. Responsible for energy coupling to the transport system. The polypeptide is Aliphatic sulfonates import ATP-binding protein SsuB (Pseudomonas fluorescens (strain Pf0-1)).